A 721-amino-acid polypeptide reads, in one-letter code: Protein quick-to-court (721 aa).

Disordered stretches follow at residues 1–42 (MMTS…RIPH), 143–210 (VGNS…ASVA), 360–379 (SSPE…EAEL), 393–428 (DEGN…MQSS), and 441–471 (SSVH…CGAG). Basic and acidic residues predominate over residues 17-31 (QVQREKDNDSAEDSH). Low complexity predominate over residues 161–201 (NGGSDISSSGTSSSSSNNKESSPRTTRTPRTPQTPQTPQTP). Basic and acidic residues predominate over residues 362–379 (PEERSASSDAVTVREAEL). Residues 406–420 (RQQQQQANHSLQAMQ) show a composition bias toward low complexity. The segment covering 441 to 454 (SSVHSKDSQTQSEA) has biased composition (polar residues). The stretch at 511–569 (KRSHNDKVEALLQKLAECNTRYSDMVPDYEQAKQRIRELEKQLEDLQRKLIEHEEKQNK) forms a coiled coil. The GRIP domain occupies 668 to 716 (HVDPEVTLQFLKSAIFYFLTDKENSQGHLQAIESILEFTDAEKQKISAA).

Expressed in the third antennal segment and the maxillary palp, with increased expression near the cuticle of both olfactory organs. Also detected in the second antenna segment. In the brain, expressed in the central nervous system, with high levels of expression in the visual system including the retina and optic lobe, and uniform expression in the cortex. Detected in the thorax and abdomen, with increased expression in the ventral ganglion. In males, detected in the reproductive tract including the ejaculatory bulb and testis.

In adult males, modulates sexual behavior by playing a role in sex discrimination and maintaining normal levels of sexual activity towards both males and females. In Drosophila melanogaster (Fruit fly), this protein is Protein quick-to-court.